Reading from the N-terminus, the 436-residue chain is Phosphoribosylamine--glycine ligase (436 aa).

An ATP-grasp domain is found at 106-318 (RKLFEDYRIP…MLEICEGIVD (213 aa)). 133-196 (MEDFDSEAVV…EERVVGEEFT (64 aa)) is an ATP binding site. Mg(2+)-binding residues include glutamine 276, glutamate 288, and asparagine 290. Residues glutamine 276, glutamate 288, and asparagine 290 each contribute to the Mn(2+) site.

The protein belongs to the GARS family. It depends on Mg(2+) as a cofactor. Mn(2+) is required as a cofactor.

The catalysed reaction is 5-phospho-beta-D-ribosylamine + glycine + ATP = N(1)-(5-phospho-beta-D-ribosyl)glycinamide + ADP + phosphate + H(+). It functions in the pathway purine metabolism; IMP biosynthesis via de novo pathway; N(1)-(5-phospho-D-ribosyl)glycinamide from 5-phospho-alpha-D-ribose 1-diphosphate: step 2/2. This is Phosphoribosylamine--glycine ligase from Methanothermobacter thermautotrophicus (strain ATCC 29096 / DSM 1053 / JCM 10044 / NBRC 100330 / Delta H) (Methanobacterium thermoautotrophicum).